Reading from the N-terminus, the 423-residue chain is Probable efflux pump mfs2 (423 aa).

Transmembrane regions (helical) follow at residues threonine 21–valine 41, serine 49–histidine 69, leucine 79–valine 99, leucine 111–valine 131, tryptophan 138–histidine 158, alanine 220–leucine 240, tyrosine 256–tyrosine 278, isoleucine 295–alanine 315, histidine 319–phenylalanine 339, alanine 360–leucine 380, and leucine 392–tryptophan 411.

It belongs to the major facilitator superfamily.

It localises to the membrane. In terms of biological role, probable efflux pump; part of the gene cluster 27 that mediates the biosynthesis of asparasone A, a sclerotium-specific anthraquinone pigment important for sclerotial survival. In Aspergillus flavus (strain ATCC 200026 / FGSC A1120 / IAM 13836 / NRRL 3357 / JCM 12722 / SRRC 167), this protein is Probable efflux pump mfs2.